A 262-amino-acid chain; its full sequence is Putative glycyl-radical enzyme activating enzyme HI_0520 (262 aa).

The 243-residue stretch at 20–262 folds into the Radical SAM core domain; the sequence is VEGQGNRSSI…CGINKILTIL (243 aa). [4Fe-4S] cluster contacts are provided by cysteine 34, cysteine 38, and cysteine 41. S-adenosyl-L-methionine-binding positions include 40–42, glycine 81, and 130–132; these read YCH and DLK.

Belongs to the organic radical-activating enzymes family. [4Fe-4S] cluster is required as a cofactor.

It catalyses the reaction glycyl-[protein] + reduced [flavodoxin] + S-adenosyl-L-methionine = glycin-2-yl radical-[protein] + semiquinone [flavodoxin] + 5'-deoxyadenosine + L-methionine + H(+). This is Putative glycyl-radical enzyme activating enzyme HI_0520 from Haemophilus influenzae (strain ATCC 51907 / DSM 11121 / KW20 / Rd).